The primary structure comprises 333 residues: PDZ domain-containing protein GIPC1 (333 aa).

Residues Met1–Ala11 are compositionally biased toward basic residues. The tract at residues Met1–Arg55 is disordered. Over residues Leu27–Ala40 the composition is skewed to gly residues. Position 68 is a phosphoserine (Ser68). The PDZ domain maps to Glu133 to Glu213. A disordered region spans residues Ile221–Arg244. 3 positions are modified to phosphoserine: Ser222, Ser225, and Ser232. Residues Gly228–Arg240 are compositionally biased toward gly residues. Thr242 bears the Phosphothreonine mark. Ser247 is subject to Phosphoserine.

This sequence belongs to the GIPC family. Interacts with SDC4/syndecan-4 and SEMA4C/semaphorin-4C. Interacts with RGS19 (C-terminus), GLUT1 (C-terminus), ACTN1, KIF1B, MYO6 and PLEKHG5. Widely expressed.

The protein resides in the cytoplasm. Its subcellular location is the membrane. In terms of biological role, may be involved in G protein-linked signaling. The chain is PDZ domain-containing protein GIPC1 (Gipc1) from Rattus norvegicus (Rat).